We begin with the raw amino-acid sequence, 787 residues long: Integrin beta-3 (787 aa).

Residues 1 to 25 (MRAQWPGQLWAALLALGALAGVVVG) form the signal peptide. Residues 26–717 (ESNICTTRGV…EEPECPKGPD (692 aa)) are Extracellular-facing. Residues 29 to 75 (ICTTRGVNSCQQCLAVSPVCAWCSDETLSQGSPRCNLKENLLKDNCA) enclose the PSI domain. 19 disulfides stabilise this stretch: Cys30-Cys48, Cys38-Cys460, Cys41-Cys63, Cys51-Cys74, Cys202-Cys209, Cys257-Cys298, Cys399-Cys411, Cys431-Cys458, Cys462-Cys482, Cys473-Cys485, Cys487-Cys496, Cys498-Cys528, Cys511-Cys526, Cys520-Cys531, Cys533-Cys546, Cys548-Cys569, Cys553-Cys567, Cys561-Cys572, and Cys574-Cys583. The VWFA domain maps to 134 to 376 (DYPVDIYYLM…QLIVDAYGKI (243 aa)). Ser146 and Ser148 together coordinate Mg(2+). Ser148, Asp151, Asp152, and Asp183 together coordinate Ca(2+). A CX3CL1-binding region spans residues 202-209 (CYNMKNAC). The interval 202–209 (CYNMKNAC) is involved in CX3CL1-, NRG1-, FGF1- and IGF1-binding. Ca(2+) is bound by residues Asn240, Asp242, Pro244, Glu245, and Asp276. Mg(2+) is bound at residue Glu245. Residues 292–312 (LPNDGHCHIGTDNHYSASTTM) are CX3CL1-binding. N-linked (GlcNAc...) asparagine glycosylation is found at Asn345 and Asn396. 4 I-EGF domains span residues 462 to 497 (CQAFAQPSSPRCNNGNGTFECGVCRCDQGWLGSMCE), 498 to 547 (CSEE…KYCE), 548 to 584 (CDDFSCVRYKGEMCSGHGQCNCGDCVCDSDWTGYYCN), and 585 to 624 (CTTRTDTCMSTNGLLCSGRGNCECGSCVCVQPGSYGDTCE). A glycan (N-linked (GlcNAc...) asparagine) is linked at Asn477. N-linked (GlcNAc...) asparagine glycosylation is present at Asn584. 9 cysteine pairs are disulfide-bonded: Cys585–Cys608, Cys592–Cys606, Cys600–Cys611, Cys613–Cys623, Cys626–Cys629, Cys633–Cys680, Cys639–Cys660, Cys642–Cys656, and Cys688–Cys712. An N-linked (GlcNAc...) asparagine glycan is attached at Asn679. The helical transmembrane segment at 718 to 740 (ILVVLLSVMGAILLIGLATLLIW) threads the bilayer. Residues 741 to 787 (KLLITIHDRKEFAKFEEERARAKWDTANNPLYKEATSTFTNITYRGT) are Cytoplasmic-facing. Thr766 carries the phosphothreonine modification. Position 772 is a phosphotyrosine (Tyr772). Residues 776–782 (TSTFTNI) carry the LIR motif. Thr778 carries the phosphothreonine modification. Phosphotyrosine is present on Tyr784.

This sequence belongs to the integrin beta chain family. As to quaternary structure, heterodimer of an alpha and a beta subunit. Beta-3 (ITGB3) associates with either alpha-IIB (ITGA2B) or alpha-V (ITGAV). Interacts with FLNB and COMP. Interacts with PDIA6 following platelet stimulation. Interacts with SYK; upon activation by ITGB3 promotes platelet adhesion. Interacts with MYO10. Interacts with DAB2. Interacts with FERMT2. Integrin ITGAV:ITGB3 interacts with FBLN5 (via N-terminus). Interacts with EMP2; regulates the levels of the heterodimer ITGA5:ITGB3 integrin expression on the plasma membrane. ITGAV:ITGB3 interacts with CCN3. ITGAV:ITGB3 and ITGA2B:ITGB3 interact with SELP (via C-type lectin domain); the interaction mediates cell-cell interaction and adhesion. ITGAV:ITGB3 interacts with AGRA2. ITGAV:ITGB3 is found in a ternary complex with CX3CR1 and CX3CL1. ITGAV:ITGB3 is found in a ternary complex with NRG1 and ERBB3. ITGAV:ITGB3 is found in a ternary complex with FGF1 and FGFR1. ITGAV:ITGB3 interacts with FGF2; it is likely that FGF2 can simultaneously bind ITGAV:ITGB3 and FGF receptors. ITGAV:ITGB3 binds to IL1B. ITGAV:ITGB3 is found in a ternary complex with IGF1 and IGF1R. ITGAV:ITGB3 interacts with IGF2. ITGAV:ITGB3 interacts with FBN1. ITGAV:ITGB3 interacts with CD9, CD81 and CD151 (via second extracellular domain). Interacts (via the allosteric site (site 2)) with CXCL12 in a CXCR4-independent manner. Interacts with MXRA8/DICAM; the interaction inhibits ITGAV:ITGB3 heterodimer formation. ITGAV:ITGB3 interacts with PTN. Forms a complex with PTPRZ1 and PTN that stimulates endothelial cell migration through ITGB3 Tyr-772 phosphorylation. ITGAV:ITGB3 interacts with SLC6A4. Interacts with SLC6A4 (via C-terminus); this interaction regulates SLC6A4 trafficking. ITGA2B:ITGB3 interacts with PPIA/CYPA; the interaction is ROS and PPIase activity-dependent and is increased in the presence of thrombin. Interacts with tensin TNS3; TNS3 also interacts with PEAK1, thus acting as an adapter molecule to bridge the association of PEAK1 with ITGB3. Interacts with TM4SF19. Phosphorylated on tyrosine residues in response to thrombin-induced platelet aggregation. Probably involved in outside-in signaling.

The protein localises to the cell membrane. Its subcellular location is the cell projection. It is found in the lamellipodium membrane. The protein resides in the cell junction. It localises to the focal adhesion. The protein localises to the postsynaptic cell membrane. Its subcellular location is the synapse. In terms of biological role, integrin alpha-V/beta-3 (ITGAV:ITGB3) is a receptor for cytotactin, fibronectin, laminin, matrix metalloproteinase-2, osteopontin, osteomodulin, prothrombin, thrombospondin, vitronectin and von Willebrand factor. Integrin alpha-IIB/beta-3 (ITGA2B:ITGB3) is a receptor for fibronectin, fibrinogen, plasminogen, prothrombin, thrombospondin and vitronectin. Integrins alpha-IIB/beta-3 and alpha-V/beta-3 recognize the sequence R-G-D in a wide array of ligands. Integrin alpha-IIB/beta-3 recognizes the sequence H-H-L-G-G-G-A-K-Q-A-G-D-V in fibrinogen gamma chain. Following activation integrin alpha-IIB/beta-3 brings about platelet/platelet interaction through binding of soluble fibrinogen. This step leads to rapid platelet aggregation which physically plugs ruptured endothelial surfaces. Fibrinogen binding enhances SELP expression in activated platelets. ITGAV:ITGB3 binds to fractalkine (CX3CL1) and acts as its coreceptor in CX3CR1-dependent fractalkine signaling. ITGAV:ITGB3 binds to NRG1 (via EGF domain) and this binding is essential for NRG1-ERBB signaling. ITGAV:ITGB3 binds to FGF1 and this binding is essential for FGF1 signaling. ITGAV:ITGB3 binds to FGF2 and this binding is essential for FGF2 signaling. ITGAV:ITGB3 binds to IGF1 and this binding is essential for IGF1 signaling. ITGAV:ITGB3 binds to IGF2 and this binding is essential for IGF2 signaling. ITGAV:ITGB3 binds to IL1B and this binding is essential for IL1B signaling. ITGAV:ITGB3 binds to PLA2G2A via a site (site 2) which is distinct from the classical ligand-binding site (site 1) and this induces integrin conformational changes and enhanced ligand binding to site 1. ITGAV:ITGB3 acts as a receptor for fibrillin-1 (FBN1) and mediates R-G-D-dependent cell adhesion to FBN1. ITGAV:ITGB3 binds to the Lilrb4a/Gp49b receptor and enhances the Lilrb4a-mediated inhibition of mast cell activation. ITGAV:ITGB3 also suppresses marginal zone B cell antibody production through its interaction with Lilrb4a. In brain, plays a role in synaptic transmission and plasticity. Involved in the regulation of the serotonin neurotransmission, is required to localize to specific compartments within the synapse the serotonin receptor SLC6A4 and for an appropriate reuptake of serotonin. Controls excitatory synaptic strength by regulating GRIA2-containing AMPAR endocytosis, which affects AMPAR abundance and composition. ITGAV:ITGB3 act as a receptor for CD40LG. ITGAV:ITGB3 acts as a receptor for IBSP and promotes cell adhesion and migration to IBSP. The chain is Integrin beta-3 from Mus musculus (Mouse).